A 330-amino-acid chain; its full sequence is Lipoyl synthase (330 aa).

The tract at residues 1–31 (MSDAPIATSSEVTQSPADYDPTKKQKSAEKT) is disordered. Residues 7–16 (ATSSEVTQSP) show a composition bias toward polar residues. Over residues 20-31 (DPTKKQKSAEKT) the composition is skewed to basic and acidic residues. [4Fe-4S] cluster contacts are provided by Cys-77, Cys-82, Cys-88, Cys-103, Cys-107, Cys-110, and Ser-317. Residues 88 to 306 (CFGKGTATFM…EEEAYKMGFT (219 aa)) enclose the Radical SAM core domain.

This sequence belongs to the radical SAM superfamily. Lipoyl synthase family. [4Fe-4S] cluster serves as cofactor.

Its subcellular location is the cytoplasm. The enzyme catalyses [[Fe-S] cluster scaffold protein carrying a second [4Fe-4S](2+) cluster] + N(6)-octanoyl-L-lysyl-[protein] + 2 oxidized [2Fe-2S]-[ferredoxin] + 2 S-adenosyl-L-methionine + 4 H(+) = [[Fe-S] cluster scaffold protein] + N(6)-[(R)-dihydrolipoyl]-L-lysyl-[protein] + 4 Fe(3+) + 2 hydrogen sulfide + 2 5'-deoxyadenosine + 2 L-methionine + 2 reduced [2Fe-2S]-[ferredoxin]. It participates in protein modification; protein lipoylation via endogenous pathway; protein N(6)-(lipoyl)lysine from octanoyl-[acyl-carrier-protein]: step 2/2. Functionally, catalyzes the radical-mediated insertion of two sulfur atoms into the C-6 and C-8 positions of the octanoyl moiety bound to the lipoyl domains of lipoate-dependent enzymes, thereby converting the octanoylated domains into lipoylated derivatives. This is Lipoyl synthase from Cupriavidus metallidurans (strain ATCC 43123 / DSM 2839 / NBRC 102507 / CH34) (Ralstonia metallidurans).